We begin with the raw amino-acid sequence, 100 residues long: ATP-dependent Clp protease adapter protein ClpS (100 aa).

This sequence belongs to the ClpS family. Binds to the N-terminal domain of the chaperone ClpA.

Involved in the modulation of the specificity of the ClpAP-mediated ATP-dependent protein degradation. In Neisseria meningitidis serogroup B (strain ATCC BAA-335 / MC58), this protein is ATP-dependent Clp protease adapter protein ClpS.